Here is a 94-residue protein sequence, read N- to C-terminus: Integration host factor subunit beta (94 aa).

The protein belongs to the bacterial histone-like protein family. Heterodimer of an alpha and a beta chain.

In terms of biological role, this protein is one of the two subunits of integration host factor, a specific DNA-binding protein that functions in genetic recombination as well as in transcriptional and translational control. This chain is Integration host factor subunit beta, found in Brucella abortus (strain S19).